A 487-amino-acid polypeptide reads, in one-letter code: (S)-N-methylcoclaurine 3'-hydroxylase isozyme 1 (487 aa).

A helical membrane pass occupies residues 4–24 (TVALIAVIISSILYLLFGGSG). Residue Cys-429 participates in heme binding.

This sequence belongs to the cytochrome P450 family. The cofactor is heme.

It localises to the endoplasmic reticulum membrane. Its subcellular location is the microsome membrane. The enzyme catalyses (S)-N-methylcoclaurine + reduced [NADPH--hemoprotein reductase] + O2 = (S)-3'-hydroxy-N-methylcoclaurine + oxidized [NADPH--hemoprotein reductase] + H2O + H(+). It participates in alkaloid biosynthesis; (S)-reticuline biosynthesis; (S)-reticuline from (S)-norcoclaurine: step 3/4. In terms of biological role, 3'-hydroxylation of (S)-N-methylcoclaurine. This Eschscholzia californica (California poppy) protein is (S)-N-methylcoclaurine 3'-hydroxylase isozyme 1 (CYP80B1).